A 103-amino-acid chain; its full sequence is NADH-quinone oxidoreductase subunit K (103 aa).

Helical transmembrane passes span L6–L26, L32–F52, and I63–L83.

The protein belongs to the complex I subunit 4L family. As to quaternary structure, NDH-1 is composed of 14 different subunits. Subunits NuoA, H, J, K, L, M, N constitute the membrane sector of the complex.

It is found in the cell inner membrane. The catalysed reaction is a quinone + NADH + 5 H(+)(in) = a quinol + NAD(+) + 4 H(+)(out). Its function is as follows. NDH-1 shuttles electrons from NADH, via FMN and iron-sulfur (Fe-S) centers, to quinones in the respiratory chain. The immediate electron acceptor for the enzyme in this species is believed to be ubiquinone. Couples the redox reaction to proton translocation (for every two electrons transferred, four hydrogen ions are translocated across the cytoplasmic membrane), and thus conserves the redox energy in a proton gradient. This is NADH-quinone oxidoreductase subunit K from Dechloromonas aromatica (strain RCB).